The sequence spans 105 residues: Dynein axonemal light chain 4 (105 aa).

It belongs to the dynein light chain family. In terms of assembly, consists of at least two heavy chains and a number of intermediate and light chains.

It localises to the cytoplasm. Its subcellular location is the cytoskeleton. The protein resides in the cilium axoneme. Functionally, force generating protein of respiratory cilia. Produces force towards the minus ends of microtubules. Dynein has ATPase activity. The sequence is that of Dynein axonemal light chain 4 (Dnal4) from Mus musculus (Mouse).